The primary structure comprises 430 residues: Probable carboxypeptidase AFLA_037450 (430 aa).

Positions 1–16 are cleaved as a signal peptide; that stretch reads MKSIYSLVLCTALTAA. N-linked (GlcNAc...) asparagine glycosylation occurs at Asn84. Zn(2+) is bound at residue Asp156. The Proton acceptor role is filled by Glu188. Glu189 lines the Zn(2+) pocket. The N-linked (GlcNAc...) asparagine glycan is linked to Asn285.

Belongs to the peptidase M20A family. Zn(2+) is required as a cofactor.

It localises to the secreted. This chain is Probable carboxypeptidase AFLA_037450, found in Aspergillus flavus (strain ATCC 200026 / FGSC A1120 / IAM 13836 / NRRL 3357 / JCM 12722 / SRRC 167).